Here is a 145-residue protein sequence, read N- to C-terminus: Methylglyoxal synthase (145 aa).

Positions M1–F145 constitute an MGS-like domain. Substrate-binding positions include H12, K16, T38–T41, and S58–G59. The active-site Proton donor/acceptor is D64. H91 serves as a coordination point for substrate.

It belongs to the methylglyoxal synthase family.

It catalyses the reaction dihydroxyacetone phosphate = methylglyoxal + phosphate. Catalyzes the formation of methylglyoxal from dihydroxyacetone phosphate. The protein is Methylglyoxal synthase of Clostridium acetobutylicum (strain ATCC 824 / DSM 792 / JCM 1419 / IAM 19013 / LMG 5710 / NBRC 13948 / NRRL B-527 / VKM B-1787 / 2291 / W).